We begin with the raw amino-acid sequence, 78 residues long: Small ribosomal subunit protein bS16 (78 aa).

This sequence belongs to the bacterial ribosomal protein bS16 family.

The sequence is that of Small ribosomal subunit protein bS16 from Maridesulfovibrio salexigens (strain ATCC 14822 / DSM 2638 / NCIMB 8403 / VKM B-1763) (Desulfovibrio salexigens).